The chain runs to 163 residues: NADH-quinone oxidoreductase subunit I (163 aa).

2 4Fe-4S ferredoxin-type domains span residues 53–83 (LRRY…IEAG) and 94–123 (VRYD…EGPN). [4Fe-4S] cluster-binding residues include C63, C66, C69, C73, C103, C106, C109, and C113.

It belongs to the complex I 23 kDa subunit family. In terms of assembly, NDH-1 is composed of 14 different subunits. Subunits NuoA, H, J, K, L, M, N constitute the membrane sector of the complex. [4Fe-4S] cluster serves as cofactor.

Its subcellular location is the cell inner membrane. The catalysed reaction is a quinone + NADH + 5 H(+)(in) = a quinol + NAD(+) + 4 H(+)(out). Its function is as follows. NDH-1 shuttles electrons from NADH, via FMN and iron-sulfur (Fe-S) centers, to quinones in the respiratory chain. The immediate electron acceptor for the enzyme in this species is believed to be ubiquinone. Couples the redox reaction to proton translocation (for every two electrons transferred, four hydrogen ions are translocated across the cytoplasmic membrane), and thus conserves the redox energy in a proton gradient. This is NADH-quinone oxidoreductase subunit I from Rhizobium johnstonii (strain DSM 114642 / LMG 32736 / 3841) (Rhizobium leguminosarum bv. viciae).